Consider the following 526-residue polypeptide: Type 2 glycosyltransferase (526 aa).

The chain crosses the membrane as a helical span at residues 25–45 (PSFDFWYSSTFWLYLFLGLWF). 2 N-linked (GlcNAc...) asparagine glycosylation sites follow: N298 and N317. A run of 3 helical transmembrane segments spans residues 340–360 (FATF…SCWW), 375–395 (WSQF…GLFI), and 403–423 (FLPV…YALI). Residues N426 and N517 are each glycosylated (N-linked (GlcNAc...) asparagine).

Belongs to the GT2 glycosyltransferase family.

Its subcellular location is the cell membrane. The protein resides in the secreted. It localises to the cell wall. Functionally, glycosyltransferase involved in the maintenance of the outermost surface of the fungal cell wall. Likely functions in the synthesis of a currently unknown, potentially minor but widespread, extracellular or outer cell wall polysaccharide which plays a key role in facilitating many interactions between plants and fungi by enabling hyphal growth on solid matrices. This is Type 2 glycosyltransferase from Gibberella zeae (strain ATCC MYA-4620 / CBS 123657 / FGSC 9075 / NRRL 31084 / PH-1) (Wheat head blight fungus).